The chain runs to 140 residues: 3-hydroxyacyl-[acyl-carrier-protein] dehydratase FabZ (140 aa).

His-47 is a catalytic residue.

The protein belongs to the thioester dehydratase family. FabZ subfamily.

Its subcellular location is the cytoplasm. It catalyses the reaction a (3R)-hydroxyacyl-[ACP] = a (2E)-enoyl-[ACP] + H2O. Functionally, involved in unsaturated fatty acids biosynthesis. Catalyzes the dehydration of short chain beta-hydroxyacyl-ACPs and long chain saturated and unsaturated beta-hydroxyacyl-ACPs. The chain is 3-hydroxyacyl-[acyl-carrier-protein] dehydratase FabZ from Streptococcus agalactiae serotype III (strain NEM316).